We begin with the raw amino-acid sequence, 303 residues long: Phytochrome-associated serine/threonine-protein phosphatase (303 aa).

Residues aspartate 50, histidine 52, aspartate 78, and asparagine 110 each contribute to the Zn(2+) site. Residue histidine 111 is the Proton donor of the active site. Zn(2+)-binding residues include histidine 160 and histidine 234.

This sequence belongs to the PPP phosphatase family. PP-6 (PP-V) subfamily. In terms of assembly, interacts with PHYA and PHYB, mostly when they are phosphorylated and in Pfr forms. Zn(2+) serves as cofactor. As to expression, mostly expressed in flowers and stems.

Its subcellular location is the cytoplasm. The enzyme catalyses O-phospho-L-seryl-[protein] + H2O = L-seryl-[protein] + phosphate. It catalyses the reaction O-phospho-L-threonyl-[protein] + H2O = L-threonyl-[protein] + phosphate. Functionally, catalytic subunit of protein phosphatase 6 (PP6). Dephosphorylates phosphorylated phytochromes, with a preference toward Pfr forms. Plays a major role in the photoperiodic control of flowering time in long days by modulating phytochrome signals in flowering time control. The sequence is that of Phytochrome-associated serine/threonine-protein phosphatase from Pisum sativum (Garden pea).